The sequence spans 198 residues: Ribosomal RNA small subunit methyltransferase G (198 aa).

S-adenosyl-L-methionine contacts are provided by residues Gly-74, Phe-79, 123-124 (IQ), and Arg-136.

This sequence belongs to the methyltransferase superfamily. RNA methyltransferase RsmG family.

The protein localises to the cytoplasm. The catalysed reaction is guanosine(527) in 16S rRNA + S-adenosyl-L-methionine = N(7)-methylguanosine(527) in 16S rRNA + S-adenosyl-L-homocysteine. Its function is as follows. Specifically methylates the N7 position of guanine in position 527 of 16S rRNA. This Orientia tsutsugamushi (strain Boryong) (Rickettsia tsutsugamushi) protein is Ribosomal RNA small subunit methyltransferase G.